Consider the following 81-residue polypeptide: Protein Vpu (81 aa).

Over 1–6 (MQPIQI) the chain is Extracellular. Residues 7 to 27 (AIVALVVAIIIAIVVWSIVII) form a helical membrane-spanning segment. The Cytoplasmic portion of the chain corresponds to 28–81 (EYRKILRQRKIDRLIDRLIERAEDSGNESEGEISALVEMGVEMGHHAPWDVDDL). Phosphoserine; by host CK2 is present on residues Ser-52 and Ser-56.

It belongs to the HIV-1 VPU protein family. In terms of assembly, homopentamer. Interacts with host CD4 and BRTC; these interactions induce proteasomal degradation of CD4. Interacts with host BST2; this interaction leads to the degradation of host BST2. Interacts with host FBXW11. Interacts with host AP1M1; this interaction plays a role in the mistrafficking and subsequent degradation of host BST2. Interacts with host RANBP2; this interaction allows Vpu to down-regulate host BLM sumoylation. Phosphorylated by host CK2. This phosphorylation is necessary for interaction with human BTRC and degradation of CD4.

It localises to the host membrane. Its activity is regulated as follows. Ion channel activity is inhibited by hexamethylene amiloride in vitro. Its function is as follows. Enhances virion budding by targeting host CD4 and Tetherin/BST2 to proteasome degradation. Degradation of CD4 prevents any unwanted premature interactions between viral Env and its host receptor CD4 in the endoplasmic reticulum. Degradation of antiretroviral protein Tetherin/BST2 is important for virion budding, as BST2 tethers new viral particles to the host cell membrane. Mechanistically, Vpu bridges either CD4 or BST2 to BTRC, a substrate recognition subunit of the Skp1/Cullin/F-box protein E3 ubiquitin ligase, induces their ubiquitination and subsequent proteasomal degradation. The alteration of the E3 ligase specificity by Vpu seems to promote the degradation of host IKBKB, leading to NF-kappa-B down-regulation and subsequent apoptosis. Acts as a viroporin that forms an oligomeric ion channel in membranes. Modulates the host DNA repair mechanisms to promote degradation of nuclear viral cDNA in cells that are already productively infected in order to suppress immune sensing and proviral hyper-integration (superinfection). Manipulates PML-NBs and modulates SUMOylation of host BLM protein thereby enhancing its DNA-end processing activity toward viral unintegrated linear DNA. Also inhibits RAD52-mediated homologous repair of viral cDNA, preventing the generation of dead-end circular forms of single copies of the long terminal repeat and permitting sustained nucleolytic attack. The chain is Protein Vpu from Human immunodeficiency virus type 1 group M subtype B (isolate BH10) (HIV-1).